Consider the following 875-residue polypeptide: MKLHRLALTNYRGIAHRDVEFPDHGVVVVCGANEIGKSSMVEALDLLLEYKDRSTKKEVKQVKPTNADVGSEVIAEISSGPYRFVYRKRFHKRCETELTVLAPRREQLTGDEAHERVRTMLAETVDTELWHAQRVLQAASTAAVDLSGCDALSRALDLAAGDDAALSGTESLLIERIEAEYARYFTPTGRPTGEWSAAVSRLAAAEAAVADCAAAVAEVDDGVRRHTELTEQVAELSQQLLAHQLRLEAARVAAEKIAAITDDAREAKLIATAAAATSGASTAAHAGRLGLLTEIDTRTAAVVAAEAKARQAADEQATARAEAEACDAALTEATQVLTAVRLRAESARRTLDQLADCEEADRLAARLARIDDIEGDRDRVCAELSAVTLTEELLSRIERAAAAVDRGGAQLASISAAVEFTAAVDIELGVGDQRVSLSAGQSWSVTATGPTEVKVPGVLTARIVPGATALDFQAKYAAAQQELADALAAGEVADLAAARSADLCRRELLSRRDQLTATLAGLCGDEQVDQLRSRLEQLCAGQPAELDLVSTDTATARAELDAVEAARIAAEKDCETRRQIAAGAARRLAETSTRATVLQNAAAAESAELGAAMTRLACERASVGDDELAAKAEADLRVLQTAEQRVIDLADELAATAPDAVAAELAEAADAVELLRERHDEAIRALHEVGVELSVFGTQGRKGKLDAAETEREHAASHHARVGRRARAARLLRSVMARHRDTTRLRYVEPYRAELHRLGRPVFGPSFEVEVDTDLRIRSRTLDDRTVPYECLSGGAKEQLGILARLAGAALVAKEDAVPVLIDDALGFTDPERLAKMGEVFDTIGADGQVIVLTCSPTRYGGVKGAHRIDLDAIQ.

This is an uncharacterized protein from Mycobacterium bovis (strain ATCC BAA-935 / AF2122/97).